We begin with the raw amino-acid sequence, 857 residues long: DNA mismatch repair protein MutS (857 aa).

613-620 (GPNMGGKS) contacts ATP. Positions 797-820 (TSLPHEQPAAHKAKDAPQVPHQSD) are disordered.

This sequence belongs to the DNA mismatch repair MutS family.

Its function is as follows. This protein is involved in the repair of mismatches in DNA. It is possible that it carries out the mismatch recognition step. This protein has a weak ATPase activity. The chain is DNA mismatch repair protein MutS from Pseudomonas putida (strain ATCC 47054 / DSM 6125 / CFBP 8728 / NCIMB 11950 / KT2440).